A 380-amino-acid polypeptide reads, in one-letter code: Enoyl-[acyl-carrier-protein] reductase, mitochondrial (380 aa).

Residues 1 to 9 constitute a mitochondrion transit peptide; that stretch reads MLPTFKRYM. The active-site Proton donor is the Y73. NADP(+) contacts are provided by residues N157, 185–188, 208–210, 283–286, and 308–310; these read TSSV, RDR, YGGM, and YWV. S339 is modified (phosphoserine). Position 373 (K373) interacts with NADP(+).

Belongs to the zinc-containing alcohol dehydrogenase family. Quinone oxidoreductase subfamily. As to quaternary structure, homodimer or in a complex with other proteins. Interacts with ARS1.

It localises to the mitochondrion matrix. The enzyme catalyses a 2,3-saturated acyl-[ACP] + NADP(+) = a (2E)-enoyl-[ACP] + NADPH + H(+). The catalysed reaction is (2E,4E)-hexadienoyl-CoA + NADPH + H(+) = (4E)-hexenoyl-CoA + NADP(+). It carries out the reaction (2E)-hexenoyl-CoA + NADPH + H(+) = hexanoyl-CoA + NADP(+). Its function is as follows. Catalyzes the NADPH-dependent reduction of trans-2-enoyl thioesters in mitochondrial fatty acid synthesis (fatty acid synthesis type II). Fatty acid chain elongation in mitochondria uses acyl carrier protein (ACP) as an acyl group carrier, but the enzyme accepts both ACP and CoA thioesters as substrates in vitro. Required for respiration and the maintenance of the mitochondrial compartment. This Saccharomyces cerevisiae (strain ATCC 204508 / S288c) (Baker's yeast) protein is Enoyl-[acyl-carrier-protein] reductase, mitochondrial (ETR1).